The sequence spans 136 residues: Large ribosomal subunit protein eL27 (136 aa).

Positions 5–36 (MKPGKVVLVLRGKYAGRKAVVVKQQDEGVSDR) constitute a KOW domain.

This sequence belongs to the eukaryotic ribosomal protein eL27 family. Component of the large ribosomal subunit.

It localises to the cytoplasm. The protein resides in the cytosol. The protein localises to the rough endoplasmic reticulum. Functionally, component of the large ribosomal subunit. The polypeptide is Large ribosomal subunit protein eL27 (rpl-27) (Caenorhabditis elegans).